The primary structure comprises 391 residues: Phosphoglycerate kinase (391 aa).

Substrate contacts are provided by residues 21 to 23, arginine 41, 64 to 67, arginine 121, and arginine 154; these read DFN and HLGR. ATP contacts are provided by residues lysine 205, glutamate 322, and 348-351; that span reads GGDS.

This sequence belongs to the phosphoglycerate kinase family. Monomer.

The protein resides in the cytoplasm. It catalyses the reaction (2R)-3-phosphoglycerate + ATP = (2R)-3-phospho-glyceroyl phosphate + ADP. It functions in the pathway carbohydrate degradation; glycolysis; pyruvate from D-glyceraldehyde 3-phosphate: step 2/5. This Solibacter usitatus (strain Ellin6076) protein is Phosphoglycerate kinase.